The primary structure comprises 132 residues: D-ribose pyranase (132 aa).

Residue His-20 is the Proton donor of the active site. Residues Asp-28, His-99, and Tyr-121–Asn-123 each bind substrate.

Belongs to the RbsD / FucU family. RbsD subfamily. In terms of assembly, homodecamer.

Its subcellular location is the cytoplasm. It carries out the reaction beta-D-ribopyranose = beta-D-ribofuranose. The protein operates within carbohydrate metabolism; D-ribose degradation; D-ribose 5-phosphate from beta-D-ribopyranose: step 1/2. Functionally, catalyzes the interconversion of beta-pyran and beta-furan forms of D-ribose. This is D-ribose pyranase from Lactococcus lactis subsp. cremoris (strain SK11).